The sequence spans 555 residues: Sesquiterpene synthase 31 (555 aa).

Residues Asp308, Asp312, Asp451, Thr455, and Glu459 each coordinate Mg(2+). The short motif at 308-312 is the DDXXD motif element; it reads DDTFD.

This sequence belongs to the terpene synthase family. Tpsa subfamily. The cofactor is Mg(2+). Requires Mn(2+) as cofactor. As to expression, expressed in stem and leaf trichomes. Detected in roots, fruits and flowers.

Its subcellular location is the cytoplasm. The enzyme catalyses (2E,6E)-farnesyl diphosphate = viridiflorene + diphosphate. It functions in the pathway secondary metabolite biosynthesis; terpenoid biosynthesis. Functionally, sesquiterpene synthase involved in the production of viridiflorene from (E,E)-farnesyl diphosphate (FPP). Has no activity with (Z,Z)-FPP. Can act with a low efficiency as a monoterpene synthase with geranyl diphosphate as substrate. The sequence is that of Sesquiterpene synthase 31 from Solanum lycopersicum (Tomato).